The chain runs to 117 residues: Large ribosomal subunit protein bL20 (117 aa).

It belongs to the bacterial ribosomal protein bL20 family.

In terms of biological role, binds directly to 23S ribosomal RNA and is necessary for the in vitro assembly process of the 50S ribosomal subunit. It is not involved in the protein synthesizing functions of that subunit. This Chromohalobacter salexigens (strain ATCC BAA-138 / DSM 3043 / CIP 106854 / NCIMB 13768 / 1H11) protein is Large ribosomal subunit protein bL20.